The following is a 960-amino-acid chain: Serine/threonine-protein kinase atg1 (960 aa).

Positions 22 to 327 (YTRLDEIGRG…FPEFFSNNVI (306 aa)) constitute a Protein kinase domain. ATP is bound by residues 28–36 (IGRGSFATV) and Lys51. Catalysis depends on Asp165, which acts as the Proton acceptor. Disordered regions lie at residues 333 to 467 (GLLA…RAQE), 503 to 538 (PRLQ…PHAN), 550 to 571 (ARAD…QSPT), 673 to 694 (SAST…SADS), 789 to 815 (RLPP…TADV), and 926 to 960 (AKRS…TPPR). Polar residues-rich tracts occupy residues 376–388 (PVTT…TPPT) and 520–536 (RRTT…SSPH). Residues 550–566 (ARADSTHQRQHSYERRY) show a composition bias toward basic and acidic residues. Over residues 789 to 800 (RLPPDHPSHPDN) the composition is skewed to basic and acidic residues. Residues 801 to 815 (HSISSTAGSSSTADV) are compositionally biased toward low complexity. Residues 930–951 (SAPTPTAGSAGKTPTSNISPVT) are compositionally biased toward polar residues.

The protein belongs to the protein kinase superfamily. Ser/Thr protein kinase family. APG1/unc-51/ULK1 subfamily. Homodimer. Forms a ternary complex with ATG13 and ATG17.

The protein localises to the cytoplasm. It is found in the preautophagosomal structure membrane. The catalysed reaction is L-seryl-[protein] + ATP = O-phospho-L-seryl-[protein] + ADP + H(+). It catalyses the reaction L-threonyl-[protein] + ATP = O-phospho-L-threonyl-[protein] + ADP + H(+). Functionally, serine/threonine protein kinase involved in the cytoplasm to vacuole transport (Cvt) and found to be essential in autophagy, where it is required for the formation of autophagosomes. Involved in the clearance of protein aggregates which cannot be efficiently cleared by the proteasome. Required for selective autophagic degradation of the nucleus (nucleophagy) as well as for mitophagy which contributes to regulate mitochondrial quantity and quality by eliminating the mitochondria to a basal level to fulfill cellular energy requirements and preventing excess ROS production. Also involved in endoplasmic reticulum-specific autophagic process, in selective removal of ER-associated degradation (ERAD) substrates. Plays a key role in ATG9 and ATG23 cycling through the pre-autophagosomal structure and is necessary to promote ATG18 binding to ATG9 through phosphorylation of ATG9. Catalyzes phosphorylation of ATG4, decreasing the interaction between ATG4 and ATG8 and impairing deconjugation of PE-conjugated forms of ATG8. This chain is Serine/threonine-protein kinase atg1, found in Penicillium rubens (strain ATCC 28089 / DSM 1075 / NRRL 1951 / Wisconsin 54-1255) (Penicillium chrysogenum).